The following is a 307-amino-acid chain: Mycothiol acetyltransferase (307 aa).

N-acetyltransferase domains are found at residues 12-157 (TRTD…PPLP) and 160-307 (VTLR…YQLG). Position 43 (glutamate 43) interacts with 1D-myo-inositol 2-(L-cysteinylamino)-2-deoxy-alpha-D-glucopyranoside. 87-89 (LAV) lines the acetyl-CoA pocket. 1D-myo-inositol 2-(L-cysteinylamino)-2-deoxy-alpha-D-glucopyranoside contacts are provided by glutamate 187, lysine 227, and glutamate 239. Acetyl-CoA contacts are provided by residues 243–245 (LGV) and 250–256 (HGGGLGK). Position 278 (tyrosine 278) interacts with 1D-myo-inositol 2-(L-cysteinylamino)-2-deoxy-alpha-D-glucopyranoside.

Belongs to the acetyltransferase family. MshD subfamily. As to quaternary structure, monomer.

The catalysed reaction is 1D-myo-inositol 2-(L-cysteinylamino)-2-deoxy-alpha-D-glucopyranoside + acetyl-CoA = mycothiol + CoA + H(+). In terms of biological role, catalyzes the transfer of acetyl from acetyl-CoA to desacetylmycothiol (Cys-GlcN-Ins) to form mycothiol. This chain is Mycothiol acetyltransferase, found in Salinispora tropica (strain ATCC BAA-916 / DSM 44818 / JCM 13857 / NBRC 105044 / CNB-440).